We begin with the raw amino-acid sequence, 390 residues long: Zinc finger CCCH domain-containing protein 46 (390 aa).

The C3H1-type zinc-finger motif lies at 2–29 (SRRQEICRNFQRGSCKYGAQCRYLHASP). The interval 27 to 129 (ASPHQQQQQQ…AAHTSCEDPQ (103 aa)) is disordered. Residues 48 to 76 (GSRQQQQPSFGSQFQQQQQQQQKPNPFGF) are compositionally biased toward low complexity. The segment covering 106–129 (PTKQTEAVQPPQAQAAHTSCEDPQ) has biased composition (polar residues). The tract at residues 146-211 (WKLTCYAHLR…FTNLLNSARP (66 aa)) is required for transcriptional activation activity. Over residues 230–248 (SSFGASQTNGPPVFSSFSQ) the composition is skewed to polar residues. Residues 230-284 (SSFGASQTNGPPVFSSFSQIGAATNIGPGPGTTAPGMPASSPFGHPSSAPLAAPT) are disordered. Over residues 250–268 (GAATNIGPGPGTTAPGMPA) the composition is skewed to low complexity.

As to quaternary structure, interacts with GSK1 and GSK4. Phosphorylated on serine and threonine residues by GSK1. Phosphorylation represses nuclear localization. In terms of tissue distribution, expressed in the adaxial face of the collar, nodes and the basal region of elongating internodes.

It localises to the nucleus. Its subcellular location is the cytoplasm. In terms of biological role, transcriptional activator that binds double-stranded DNA and the single-stranded RNA polymers poly(rA), poly(rU) and poly(rG), but not poly(rC). Mediates optimal plant architecture through brassinosteroid (BR) signaling. May act as a negative regulator in sterol homeostasis. Acts as a negative regulator of BR signaling. Binds to the specific DNA sequence 5'-CTCGC-3' of BZR1 promoter and negatively regulates BZR1. Acts as an antagonistic transcription factor of BZR1 to attenuate the BR signaling pathway and regulate leaf bending. Represses the expression of ILI1, and activates that of IBH1 to balance the regulation activity of BZR1. The sequence is that of Zinc finger CCCH domain-containing protein 46 from Oryza sativa subsp. japonica (Rice).